Here is a 611-residue protein sequence, read N- to C-terminus: DNA mismatch repair protein MutL (611 aa).

Belongs to the DNA mismatch repair MutL/HexB family.

This protein is involved in the repair of mismatches in DNA. It is required for dam-dependent methyl-directed DNA mismatch repair. May act as a 'molecular matchmaker', a protein that promotes the formation of a stable complex between two or more DNA-binding proteins in an ATP-dependent manner without itself being part of a final effector complex. The protein is DNA mismatch repair protein MutL of Bartonella bacilliformis (strain ATCC 35685 / KC583 / Herrer 020/F12,63).